Consider the following 974-residue polypeptide: Glycine dehydrogenase (decarboxylating) (974 aa).

Lys-720 carries the N6-(pyridoxal phosphate)lysine modification.

Belongs to the GcvP family. In terms of assembly, the glycine cleavage system is composed of four proteins: P, T, L and H. The cofactor is pyridoxal 5'-phosphate.

It catalyses the reaction N(6)-[(R)-lipoyl]-L-lysyl-[glycine-cleavage complex H protein] + glycine + H(+) = N(6)-[(R)-S(8)-aminomethyldihydrolipoyl]-L-lysyl-[glycine-cleavage complex H protein] + CO2. The glycine cleavage system catalyzes the degradation of glycine. The P protein binds the alpha-amino group of glycine through its pyridoxal phosphate cofactor; CO(2) is released and the remaining methylamine moiety is then transferred to the lipoamide cofactor of the H protein. The sequence is that of Glycine dehydrogenase (decarboxylating) from Cupriavidus metallidurans (strain ATCC 43123 / DSM 2839 / NBRC 102507 / CH34) (Ralstonia metallidurans).